Here is a 295-residue protein sequence, read N- to C-terminus: Secreted frizzled-related protein 2 (295 aa).

The first 24 residues, 1–24 (MPRGPASLLLLVLASHCCLGSARG), serve as a signal peptide directing secretion. The FZ domain maps to 35-155 (YKRSNCKPIP…PQDNDLCIPL (121 aa)). Disulfide bonds link Cys-40/Cys-103, Cys-50/Cys-96, Cys-87/Cys-125, Cys-114/Cys-152, Cys-118/Cys-142, Cys-172/Cys-245, Cys-175/Cys-247, and Cys-190/Cys-295. In terms of domain architecture, NTR spans 172–295 (CEACKTKNED…ISRSIRKLQC (124 aa)).

This sequence belongs to the secreted frizzled-related protein (sFRP) family. As to expression, highly expressed in the eye. Weaker expression in heart and lung.

Its subcellular location is the secreted. Functionally, soluble frizzled-related proteins (sFRPS) function as modulators of Wnt signaling through direct interaction with Wnts. They have a role in regulating cell growth and differentiation in specific cell types. SFRP2 may be important for eye retinal development and for myogenesis. In Mus musculus (Mouse), this protein is Secreted frizzled-related protein 2.